A 351-amino-acid polypeptide reads, in one-letter code: MSKAYEQAGVNIEAGYEAVKRMKSHVERTNRLGVMGTFGGFGGMFDLSELNLKEPVLISGTDGVGTKLKLAFMVDKHDTIGVDCVAMCVNDIVAQGAEPLYFLDYVALGKAEPAKIEQIVKGVADGCVQSGAALIGGETAEMPGLYEEDEYDLAGFAVGACEKSAIVTGERIVEGDVLIGIASSGVHSNGYSLVRKIVFADRQYAVDAIVENYEDLGPIGEALLVPTKLYAKPVLAALKAADVHGCAHVTGGGFYENLPRMMPEGLATEIDLGSWPVLRIFEFLKDKGQLEDKDLYNVFNMGIGFVIAAPAAEADKVMAAVEANGEKAYTIGRVIKGNGVVFNGTHDGSLV.

The protein belongs to the AIR synthase family.

The protein localises to the cytoplasm. It catalyses the reaction 2-formamido-N(1)-(5-O-phospho-beta-D-ribosyl)acetamidine + ATP = 5-amino-1-(5-phospho-beta-D-ribosyl)imidazole + ADP + phosphate + H(+). Its pathway is purine metabolism; IMP biosynthesis via de novo pathway; 5-amino-1-(5-phospho-D-ribosyl)imidazole from N(2)-formyl-N(1)-(5-phospho-D-ribosyl)glycinamide: step 2/2. The protein is Phosphoribosylformylglycinamidine cyclo-ligase of Lysinibacillus sphaericus (strain C3-41).